Here is a 103-residue protein sequence, read N- to C-terminus: Muscarinic toxin BM14 (103 aa).

The N-terminal stretch at methionine 1 to threonine 21 is a signal peptide. 5 disulfides stabilise this stretch: cysteine 24–cysteine 45, cysteine 27–cysteine 37, cysteine 38–cysteine 72, cysteine 76–cysteine 90, and cysteine 91–cysteine 96.

Belongs to the three-finger toxin family. Ancestral subfamily. Orphan group XVII sub-subfamily. Expressed by the venom gland.

The protein resides in the secreted. This toxin inhibits the binding of [3H]quinuclidinyl benzilate to the M2 muscarinic acetylcholine (mAchR) receptor subtype (CHRM2). The sequence is that of Muscarinic toxin BM14 from Bungarus multicinctus (Many-banded krait).